The sequence spans 182 residues: PTS system glucitol/sorbitol-specific EIIC component (182 aa).

The 182-residue stretch at 1-182 folds into the PTS EIIC type-5 domain; the sequence is MDAIVYFAKG…IELSNQLKAN (182 aa). 3 helical membrane passes run 28–48, 63–83, and 139–159; these read GIIPKVLLLLVFMNSIIAFIG, VILAYGVLPFLSAFMLGNPMA, and TALGLRYLLVGLVMNFFAGWV.

The protein localises to the cell membrane. In terms of biological role, the phosphoenolpyruvate-dependent sugar phosphotransferase system (PTS), a major carbohydrate active transport system, catalyzes the phosphorylation of incoming sugar substrates concomitant with their translocation across the cell membrane. The enzyme II complex composed of SrlA, SrlB and SrlE is involved in glucitol/sorbitol transport. The chain is PTS system glucitol/sorbitol-specific EIIC component (srlA) from Clostridium beijerinckii (strain ATCC 51743 / NCIMB 8052) (Clostridium acetobutylicum).